The following is a 234-amino-acid chain: tRNA (guanine-N(1)-)-methyltransferase (234 aa).

S-adenosyl-L-methionine is bound by residues G112 and 132–137 (IGDFIL).

It belongs to the RNA methyltransferase TrmD family. In terms of assembly, homodimer.

It localises to the cytoplasm. It catalyses the reaction guanosine(37) in tRNA + S-adenosyl-L-methionine = N(1)-methylguanosine(37) in tRNA + S-adenosyl-L-homocysteine + H(+). Its function is as follows. Specifically methylates guanosine-37 in various tRNAs. In Campylobacter jejuni subsp. jejuni serotype O:6 (strain 81116 / NCTC 11828), this protein is tRNA (guanine-N(1)-)-methyltransferase.